The primary structure comprises 349 residues: Farnesyl pyrophosphate synthase vrtD (349 aa).

Residues lysine 53, arginine 56, and glutamine 92 each contribute to the isopentenyl diphosphate site. Mg(2+) is bound by residues aspartate 99 and aspartate 103. Arginine 108 provides a ligand contact to dimethylallyl diphosphate. Arginine 109 is an isopentenyl diphosphate binding site. Lysine 196, threonine 197, glutamine 236, lysine 253, and lysine 262 together coordinate dimethylallyl diphosphate.

The protein belongs to the FPP/GGPP synthase family. Mg(2+) is required as a cofactor.

The enzyme catalyses isopentenyl diphosphate + dimethylallyl diphosphate = (2E)-geranyl diphosphate + diphosphate. It carries out the reaction isopentenyl diphosphate + (2E)-geranyl diphosphate = (2E,6E)-farnesyl diphosphate + diphosphate. It participates in secondary metabolite biosynthesis; terpenoid biosynthesis. In terms of biological role, farnesyl pyrophosphate synthase; part of the gene cluster that mediates the biosynthesis of viridicatumtoxin, a tetracycline-like fungal meroterpenoid with a unique, fused spirobicyclic ring system. The first step of the pathway is the production of the malonamoyl-CoA starter unit for the polyketide synthase vrtA. The aldolase vrtJ may be involved in the synthesis of the malonamate substrate for malonamoyl-CoA synthetase vrtB. The polyketide synthase vrtA then may utilize the malonamoyl-CoA starter unit, followed by sequential condensation of eight malonyl-CoA units to form the polyketide backbone. The cyclization of the last ring could be mediated by the lactamase-like protein vrtG. The proposed post-PKS tailoring steps are a hydroxylation at C5 catalyzed the cytochrome P450 monooxygenase vrtE, a hydroxylation at C12a catalyzed by VrtH and/or VrtI, and an O-methylation by the O-methyltransferase vrtF. VrtC is then proposed to catalyze the transfer of a geranyl group synthesized by vrtD to the aromatic C ring of the tetracyclic polyketide intermediate of viridicatumtoxin to yield previridicatumtoxin. Finally, the cytochrome P450 monooxygenase vrtK catalyzes the spirocyclization of the geranyl moiety of previridicatumtoxin to afford viridicatumtoxin. The protein is Farnesyl pyrophosphate synthase vrtD of Penicillium aethiopicum.